A 242-amino-acid polypeptide reads, in one-letter code: DNA repair protein RecO (242 aa).

It belongs to the RecO family. Monomer.

Functionally, involved in DNA repair and RecF pathway recombination. The chain is DNA repair protein RecO from Shigella sonnei (strain Ss046).